Consider the following 177-residue polypeptide: SKP1-like protein 15 (177 aa).

The interval 108–167 is interaction with the F-box domain of F-box proteins; the sequence is ILAANYLNVEGLLGLTCQTVADYIKDKTPEEVRELFNIENDFTHEEEEEAIRKENAWAFE.

The protein belongs to the SKP1 family. As to quaternary structure, part of a SCF (SKP1-cullin-F-box) protein ligase complex. Expressed at low levels in seedlings and leaves.

Its subcellular location is the nucleus. It functions in the pathway protein modification; protein ubiquitination. Involved in ubiquitination and subsequent proteasomal degradation of target proteins. Together with CUL1, RBX1 and a F-box protein, it forms a SCF E3 ubiquitin ligase complex. The functional specificity of this complex depends on the type of F-box protein. In the SCF complex, it serves as an adapter that links the F-box protein to CUL1. In Arabidopsis thaliana (Mouse-ear cress), this protein is SKP1-like protein 15 (ASK15).